Here is a 115-residue protein sequence, read N- to C-terminus: Protein translation factor SUI1 homolog (115 aa).

It belongs to the SUI1 family.

In terms of biological role, probably involved in translation. The polypeptide is Protein translation factor SUI1 homolog (Sporobolus stapfianus (Ressurection grass)).